A 199-amino-acid polypeptide reads, in one-letter code: MYETYHSGWIECITGSMFSGKSEELIRRLRRGIYAKQKVVVFKPAIDDRYHKEKVVSHNGNAIEAINISKASEIMTHDLTNVDVIGIDEVQFFDDEIVSIVEKLSADGHRVIVAGLDMDFRGEPFEPMPKLMAVSEQVTKLQAVCAVCGSSSSRTQRLINGKPAKIDDPIILVGANESYEPRCRAHHIVAPSDNNKEEL.

ATP contacts are provided by residues 15–22 (GSMFSGKS) and 88–91 (DEVQ). Catalysis depends on Glu-89, which acts as the Proton acceptor. Zn(2+)-binding residues include Cys-145, Cys-148, Cys-183, and His-186.

Belongs to the thymidine kinase family. Homotetramer.

Its subcellular location is the cytoplasm. The enzyme catalyses thymidine + ATP = dTMP + ADP + H(+). The chain is Thymidine kinase from Staphylococcus aureus (strain USA300).